A 140-amino-acid chain; its full sequence is CDGSH iron-sulfur domain-containing protein 2 homolog (140 aa).

Residues 1-35 (MEAIAKLIKVQLPNYLQKLPVPSSLSGFAELSPSD) are Lumenal-facing. Residues 36–59 (AIAVVFPFAVVSWLIGYSTYKFFQ) traverse the membrane as a helical segment. Residues 60 to 140 (PKAVELPPSP…GPLIVKGKAN (81 aa)) lie on the Cytoplasmic side of the membrane. Residues Cys-104, Cys-106, Cys-115, and His-119 each coordinate [2Fe-2S] cluster.

This sequence belongs to the CISD protein family. CISD2 subfamily. Requires [2Fe-2S] cluster as cofactor.

The protein localises to the endoplasmic reticulum membrane. The polypeptide is CDGSH iron-sulfur domain-containing protein 2 homolog (Trichoplax adhaerens (Trichoplax reptans)).